A 431-amino-acid polypeptide reads, in one-letter code: 5-methylthioadenosine/S-adenosylhomocysteine deaminase (431 aa).

Residues His-66 and His-68 each contribute to the Zn(2+) site. Glu-95, Arg-147, and His-185 together coordinate substrate. Position 212 (His-212) interacts with Zn(2+). 2 residues coordinate substrate: Glu-215 and Asp-300. Asp-300 provides a ligand contact to Zn(2+).

It belongs to the metallo-dependent hydrolases superfamily. MTA/SAH deaminase family. Zn(2+) serves as cofactor.

The enzyme catalyses S-adenosyl-L-homocysteine + H2O + H(+) = S-inosyl-L-homocysteine + NH4(+). The catalysed reaction is S-methyl-5'-thioadenosine + H2O + H(+) = S-methyl-5'-thioinosine + NH4(+). Its function is as follows. Catalyzes the deamination of 5-methylthioadenosine and S-adenosyl-L-homocysteine into 5-methylthioinosine and S-inosyl-L-homocysteine, respectively. Is also able to deaminate adenosine. The protein is 5-methylthioadenosine/S-adenosylhomocysteine deaminase of Desulfitobacterium hafniense (strain DSM 10664 / DCB-2).